Here is a 652-residue protein sequence, read N- to C-terminus: Starch synthase 1, chloroplastic/amyloplastic (652 aa).

The N-terminal 49 residues, 1 to 49, are a transit peptide targeting the chloroplast; it reads MASLQISGSVKFEPFVGFNRIRHFRPIASLGFPRFRRRFSIGRSLLLRR. Lys156 is a binding site for ADP-alpha-D-glucose.

It belongs to the glycosyltransferase 1 family. Bacterial/plant glycogen synthase subfamily. In terms of tissue distribution, expressed in roots, leaves, stems, buds and flowers.

It is found in the plastid. The protein localises to the chloroplast. The protein resides in the amyloplast. It carries out the reaction [(1-&gt;4)-alpha-D-glucosyl](n) + ADP-alpha-D-glucose = [(1-&gt;4)-alpha-D-glucosyl](n+1) + ADP + H(+). The protein operates within glycan biosynthesis; starch biosynthesis. In terms of biological role, involved in the synthesis of short glycan chains within amylopectin in leaves. Is required to generate chains up to about a degree of polymerization of 10 (DP10). The sequence is that of Starch synthase 1, chloroplastic/amyloplastic (SS1) from Arabidopsis thaliana (Mouse-ear cress).